Here is a 143-residue protein sequence, read N- to C-terminus: Transcriptional regulator MraZ (143 aa).

2 SpoVT-AbrB domains span residues 5-47 (EYQH…PQEE) and 76-119 (ASEC…SKSE).

This sequence belongs to the MraZ family. In terms of assembly, forms oligomers.

The protein resides in the cytoplasm. The protein localises to the nucleoid. The chain is Transcriptional regulator MraZ from Listeria welshimeri serovar 6b (strain ATCC 35897 / DSM 20650 / CCUG 15529 / CIP 8149 / NCTC 11857 / SLCC 5334 / V8).